The primary structure comprises 159 residues: Type IV major alpha-pilin (159 aa).

A propeptide spans 1–6 (leader sequence); that stretch reads MNAQKG. Residue F7 is modified to N-methylphenylalanine. A helical membrane pass occupies residues 7–27; the sequence is FTLIELMIVIAIIGILAAIAL. The disordered stretch occupies residues 64–87; sequence VLSEESSTSKENIGLTSSETSTKP. Polar residues predominate over residues 67 to 87; sequence EESSTSKENIGLTSSETSTKP. An intrachain disulfide couples C137 to C156.

Belongs to the N-Me-Phe pilin family. Major component of the type IV pilus (T4P) that plays a role in surface and attachment to the host epithelial tissues.

It localises to the fimbrium. The protein localises to the membrane. In Moraxella bovis, this protein is Type IV major alpha-pilin (tfpI).